We begin with the raw amino-acid sequence, 179 residues long: Inner membrane-spanning protein YciB (179 aa).

Transmembrane regions (helical) follow at residues I22–V42, M50–N70, W76–M96, L121–L141, and F149–I169.

It belongs to the YciB family.

The protein resides in the cell inner membrane. Functionally, plays a role in cell envelope biogenesis, maintenance of cell envelope integrity and membrane homeostasis. This chain is Inner membrane-spanning protein YciB, found in Citrobacter koseri (strain ATCC BAA-895 / CDC 4225-83 / SGSC4696).